The primary structure comprises 2590 residues: MNLLRRSGKRRRSESGSDSFSGSGGDSSASPQFLSGSVLSPPPGLGRCLKAAAAGECKPTVPDYERDKLLLANWGLPKAVLEKYHSFGVKKMFEWQAECLLLGQVLEGKNLVYSAPTSAGKTLVAELLILKRVLEMRKKALFILPFVSVAKEKKYYLQSLFQEVGIKVDGYMGSTSPSRHFSSLDIAVCTIERANGLINRLIEENKMDLLGMVVVDELHMLGDSHRGYLLELLLTKICYITRKSASCQADLASSLSNAVQIVGMSATLPNLELVASWLNAELYHTDFRPVPLLESVKVGNSIYDSSMKLVREFEPMLQVKGDEDHVVSLCYETICDNHSVLLFCPSKKWCEKLADIIAREFYNLHHQAEGLVKPSECPPVILEQKELLEVMDQLRRLPSGLDSVLQKTVPWGVAFHHAGLTFEERDIIEGAFRQGLIRVLAATSTLSSGVNLPARRVIIRTPIFGGRPLDILTYKQMVGRAGRKGVDTVGESILICKNSEKSKGIALLQGSLKPVRSCLQRREGEEVTGSMIRAILEIIVGGVASTSQDMHTYAACTFLAASMKEGKQGIQRNQESVQLGAIEACVMWLLENEFIQSTEASDGTEGKVYHPTHLGSATLSSSLSPADTLDIFADLQRAMKGFVLENDLHILYLVTPMFEDWTTIDWYRFFCLWEKLPTSMKRVAELVGVEEGFLARCVKGKVVARTERQHRQMAIHKRFFTSLVLLDLISEVPLREINQKYGCNRGQIQSLQQSAAVYAGMITVFSNRLGWHNMELLLSQFQKRLTFGIQRELCDLVRVSLLNAQRARVLYASGFHTVADLARANIVEVEVILKNAVPFKSARKAVDEEEEAVEERRNMRTIWVTGRKGLTEREAAALIVEEARMILQQDLVEMGVQWNPCALLHSSTCSLTHSESEVKEHTFISQTKSSYKKLTSKNKSNTIFSDSYIKHSPNIVQDLNKSREHTSSFNCNFQNGNQEHQTCSIFRARKRASLDINKEKPGASQNEGKTSDKKVVQTFSQKTKKAPLNFNSEKMSRSFRSWKRRKHLKRSRDSSPLKDSGACRIHLQGQTLSNPSLCEDPFTLDEKKTEFRNSGPFAKNVSLSGKEKDNKTSFPLQIKQNCSWNITLTNDNFVEHIVTGSQSKNVTCQATSVVSEKGRGVAVEAEKINEVLIQNGSKNQNVYMKHHDIHPINQYLRKQSHEQTSTITKQKNIIERQMPCEAVSSYINRDSNVTINCERIKLNTEENKPSHFQALGDDISRTVIPSEVLPSAGAFSKSEGQHENFLNISRLQEKTGTYTTNKTKNNHVSDLGLVLCDFEDSFYLDTQSEKIIQQMATENAKLGAKDTNLAAGIMQKSLVQQNSMNSFQKECHIPFPAEQHPLGATKIDHLDLKTVGTMKQSSDSHGVDILTPESPIFHSPILLEENGLFLKKNEVSVTDSQLNSFLQGYQTQETVKPVILLIPQKRTPTGVEGECLPVPETSLNMSDSLLFDSFSDDYLVKEQLPDMQMKEPLPSEVTSNHFSDSLCLQEDLIKKSNVNENQDTHQQLTCSNDESIIFSEMDSVQMVEALDNVDIFPVQEKNHTVVSPRALELSDPVLDEHHQGDQDGGDQDERAEKSKLTGTRQNHSFIWSGASFDLSPGLQRILDKVSSPLENEKLKSMTINFSSLNRKNTELNEEQEVISNLETKQVQGISFSSNNEVKSKIEMLENNANHDETSSLLPRKESNIVDDNGLIPPTPIPTSASKLTFPGILETPVNPWKTNNVLQPGESYLFGSPSDIKNHDLSPGSRNGFKDNSPISDTSFSLQLSQDGLQLTPASSSSESLSIIDVASDQNLFQTFIKEWRCKKRFSISLACEKIRSLTSSKTATIGSRFKQASSPQEIPIRDDGFPIKGCDDTLVVGLAVCWGGRDAYYFSLQKEQKHSEISASLVPPSLDPSLTLKDRMWYLQSCLRKESDKECSVVIYDFIQSYKILLLSCGISLEQSYEDPKVACWLLDPDSQEPTLHSIVTSFLPHELPLLEGMETSQGIQSLGLNAGSEHSGRYRASVESILIFNSMNQLNSLLQKENLQDVFRKVEMPSQYCLALLELNGIGFSTAECESQKHIMQAKLDAIETQAYQLAGHSFSFTSSDDIAEVLFLELKLPPNREMKNQGSKKTLGSTRRGIDNGRKLRLGRQFSTSKDVLNKLKALHPLPGLILEWRRITNAITKVVFPLQREKCLNPFLGMERIYPVSQSHTATGRITFTEPNIQNVPRDFEIKMPTLVGESPPSQAVGKGLLPMGRGKYKKGFSVNPRCQAQMEERAADRGMPFSISMRHAFVPFPGGSILAADYSQLELRILAHLSHDRRLIQVLNTGADVFRSIAAEWKMIEPESVGDDLRQQAKQICYGIIYGMGAKSLGEQMGIKENDAACYIDSFKSRYTGINQFMTETVKNCKRDGFVQTILGRRRYLPGIKDNNPYRKAHAERQAINTIVQGSAADIVKIATVNIQKQLETFHSTFKSHGHREGMLQSDQTGLSRKRKLQGMFCPIRGGFFILQLHDELLYEVAEEDVVQVAQIVKNEMESAVKLSVKLKVKVKIGASWGELKDFDV.

Basic residues predominate over residues 1-12 (MNLLRRSGKRRR). A disordered region spans residues 1-33 (MNLLRRSGKRRRSESGSDSFSGSGGDSSASPQF). A compositionally biased stretch (low complexity) spans 16–30 (GSDSFSGSGGDSSAS). Residues glutamine 96 and 115–122 (APTSAGKT) contribute to the ATP site. The region spanning 102–286 (LGQVLEGKNL…WLNAELYHTD (185 aa)) is the Helicase ATP-binding domain. A helicase activity region spans residues 102–554 (LGQVLEGKNL…STSQDMHTYA (453 aa)). The DEAH box motif lies at 216-219 (DELH). In terms of domain architecture, Helicase C-terminal spans 321–554 (GDEDHVVSLC…STSQDMHTYA (234 aa)). The interaction with RAD51 stretch occupies residues 847-894 (DEEEEAVEERRNMRTIWVTGRKGLTEREAAALIVEEARMILQQDLVEM). N6-acetyllysine is present on lysine 990. The disordered stretch occupies residues 1034-1060 (KMSRSFRSWKRRKHLKRSRDSSPLKDS). A compositionally biased stretch (basic residues) spans 1040–1050 (RSWKRRKHLKR). Residues serine 1289, serine 1482, serine 1486, serine 1488, serine 1493, serine 1555, and serine 1563 each carry the phosphoserine; by PLK1 modification. The tract at residues 1594 to 1622 (SDPVLDEHHQGDQDGGDQDERAEKSKLTG) is disordered. Positions 1598–1619 (LDEHHQGDQDGGDQDERAEKSK) are enriched in basic and acidic residues. Phosphoserine; by PLK1 occurs at positions 1628 and 1635. Threonine 1755 carries the phosphothreonine; by PLK1 modification. The tract at residues 1777-1797 (PSDIKNHDLSPGSRNGFKDNS) is disordered. The interval 2097-2584 (AECESQKHIM…KVKIGASWGE (488 aa)) is DNA polymerase activity. Loop stretches follow at residues 2142–2177 (KLPP…GRQF) and 2257–2322 (EIKM…VPFP). The Mg(2+) site is built by aspartate 2330 and tyrosine 2331. A loop 3 region spans residues 2491–2535 (QLETFHSTFKSHGHREGMLQSDQTGLSRKRKLQGMFCPIRGGFFI). Residue aspartate 2540 participates in Mg(2+) binding.

This sequence belongs to the DNA polymerase type-A family. In terms of assembly, homomultimer; forms homodimers and homotetramers. Interacts with RAD51. Interacts with ORC2 and ORC4. Interacts with RHNO1; interaction takes place during mitosis and promotes POLQ recruitment to DNA damage sites. Interacts (when phosphorylated) with TOPBP1 (via BRCT domains 7 and 8); promoting POLQ recruitment to DNA damage sites. Mg(2+) is required as a cofactor. Phosphorylated by PLK1; promoting interaction with TOPBP1 and recruitment to DNA damage sites. As to expression, highly expressed in testis.

Its subcellular location is the nucleus. It localises to the chromosome. The catalysed reaction is DNA(n) + a 2'-deoxyribonucleoside 5'-triphosphate = DNA(n+1) + diphosphate. The enzyme catalyses ATP + H2O = ADP + phosphate + H(+). Its activity is regulated as follows. Specifically inhibited by the antibiotic novobiocin. The polymerase activity is specifically inhibited by the small molecule ART558. Novobiocin and ART558 confer specific killing of BRCA1/2-deficient cells and synergize with the poly [ADP-ribose] polymerase (PARP) inhibitor olaparib. In terms of biological role, low-fidelity DNA polymerase with a helicase activity that promotes microhomology-mediated end-joining (MMEJ), an alternative non-homologous end-joining (NHEJ) machinery required to repair double-strand breaks in DNA during mitosis. MMEJ is an error-prone repair pathway that produces deletions of sequences from the strand being repaired and promotes genomic rearrangements, such as telomere fusions, some of them leading to cellular transformation. MMEJ is required during mitosis to repair persistent double-strand breaks that originate in S-phase. Although error-prone, MMEJ protects against chromosomal instability and tumorigenesis. The polymerase acts by binding directly the 2 ends of resected double-strand breaks, allowing microhomologous sequences in the overhangs to form base pairs. It then extends each strand from the base-paired region using the opposing overhang as a template. Requires partially resected DNA containing 2 to 6 base pairs of microhomology to perform MMEJ. The polymerase lacks proofreading activity and is highly promiscuous: unlike most polymerases, promotes extension of ssDNA and partial ssDNA (pssDNA) substrates. When the ends of a break do not contain terminal microhomology must identify embedded complementary sequences through a scanning step. Also acts as a DNA helicase, promoting dissociation of the replication protein A complex (RPA/RP-A), composed of RPA1, RPA2 and RPA3, from resected double-strand breaks to allow their annealing and subsequent joining by MMEJ. Removal of RPA/RP-A complex proteins prevents RAD51 accumulation at resected ends, thereby inhibiting homology-recombination repair (HR) pathway. Also shows RNA-directed DNA polymerase activity to mediate DNA repair in vitro; however this activity needs additional evidence in vivo. May also have lyase activity. Involved in somatic hypermutation of immunoglobulin genes, a process that requires the activity of DNA polymerases to ultimately introduce mutations at both A/T and C/G base pairs. POLQ-mediated end joining activity is involved in random integration of exogenous DNA hampers. This is DNA polymerase theta from Homo sapiens (Human).